Consider the following 259-residue polypeptide: Adenosylcobinamide-GDP ribazoletransferase (259 aa).

Helical transmembrane passes span 9-29 (NLFF…WIEV), 43-63 (LVGL…LYWV), 64-84 (SPSV…GGFH), 118-138 (ALAL…LALF), 143-163 (VSLA…SFIF), and 196-216 (VLAL…GLVI).

Belongs to the CobS family. The cofactor is Mg(2+).

Its subcellular location is the cell inner membrane. It carries out the reaction alpha-ribazole + adenosylcob(III)inamide-GDP = adenosylcob(III)alamin + GMP + H(+). The enzyme catalyses alpha-ribazole 5'-phosphate + adenosylcob(III)inamide-GDP = adenosylcob(III)alamin 5'-phosphate + GMP + H(+). It participates in cofactor biosynthesis; adenosylcobalamin biosynthesis; adenosylcobalamin from cob(II)yrinate a,c-diamide: step 7/7. Joins adenosylcobinamide-GDP and alpha-ribazole to generate adenosylcobalamin (Ado-cobalamin). Also synthesizes adenosylcobalamin 5'-phosphate from adenosylcobinamide-GDP and alpha-ribazole 5'-phosphate. The chain is Adenosylcobinamide-GDP ribazoletransferase from Shewanella halifaxensis (strain HAW-EB4).